Here is a 302-residue protein sequence, read N- to C-terminus: MPGQKIETGHEDIVHDVQMDYYGKRIATASSDCTIKITGVSNNGGSQQLATLTGHRGPVWEVAWAHPKYGSILASCSYDGQVILWKEGNQNQWTQDHVFTDHKSSVNSIAWAPHDIGLSLACGSSDGNISVFTARADGGWDTSRIDQAHPVGVTSVSWAPATAPGALVSSGLLDPVYKLASGGCDNTVKVWKLANGSWKMDCFPALQKHTDWVRDVAWAPNLGLPKSTIASGSQDGKVIIWTVGKEGEQWEGKVLKDFMTPVWRVSWSLTGNLLAVSDGNNNVTVWKEAVDGEWEQVTAVEP.

WD repeat units lie at residues 9 to 48, 54 to 95, 101 to 142, 148 to 201, 208 to 251, and 257 to 296; these read GHED…GSQQ, GHRG…QWTQ, DHKS…GWDT, AHPV…WKMD, KHTD…EQWE, and DFMT…EWEQ.

It belongs to the WD repeat SEC13 family. Part of the nuclear pore complex (NPC). The NPC has an eight-fold symmetrical structure comprising a central transport channel and two rings, the cytoplasmic and nuclear rings, to which eight filaments are attached. The cytoplasmic filaments have loose ends, while the nuclear filaments are joined in a distal ring, forming a nuclear basket. NPCs are highly dynamic in configuration and composition, and can be devided in 3 subcomplexes, the NUP62 subcomplex, the NUP107-160 subcomplex and the NUP93 subcomplex, containing approximately 30 different nucleoporin proteins. Interacts with MAG5, SEC31A and SEC31B.

It is found in the golgi apparatus. Its subcellular location is the endoplasmic reticulum. It localises to the nucleus envelope. The protein localises to the nucleus. The protein resides in the nuclear pore complex. In terms of biological role, required for protein transport from the endoplasmic reticulum to the Golgi apparatus. The protein is Protein transport protein SEC13 homolog B of Arabidopsis thaliana (Mouse-ear cress).